A 212-amino-acid polypeptide reads, in one-letter code: Probable chemoreceptor glutamine deamidase CheD (212 aa).

This sequence belongs to the CheD family.

The enzyme catalyses L-glutaminyl-[protein] + H2O = L-glutamyl-[protein] + NH4(+). Functionally, probably deamidates glutamine residues to glutamate on methyl-accepting chemotaxis receptors (MCPs), playing an important role in chemotaxis. This is Probable chemoreceptor glutamine deamidase CheD from Bordetella parapertussis (strain 12822 / ATCC BAA-587 / NCTC 13253).